Here is an 81-residue protein sequence, read N- to C-terminus: MELTLGLVAIASAILIAFGALGTAIGFGLLGGRFLEAVARQPELAPQLQTRMFLIAGLLDAVPMIGVGIGLFFIFANPFVG.

2 helical membrane passes run 7–27 (LVAI…AIGF) and 55–75 (IAGL…FFIF).

It belongs to the ATPase C chain family. In terms of assembly, F-type ATPases have 2 components, F(1) - the catalytic core - and F(0) - the membrane proton channel. F(1) has five subunits: alpha(3), beta(3), gamma(1), delta(1), epsilon(1). F(0) has three main subunits: a(1), b(2) and c(10-14). The alpha and beta chains form an alternating ring which encloses part of the gamma chain. F(1) is attached to F(0) by a central stalk formed by the gamma and epsilon chains, while a peripheral stalk is formed by the delta and b chains.

Its subcellular location is the cell inner membrane. F(1)F(0) ATP synthase produces ATP from ADP in the presence of a proton or sodium gradient. F-type ATPases consist of two structural domains, F(1) containing the extramembraneous catalytic core and F(0) containing the membrane proton channel, linked together by a central stalk and a peripheral stalk. During catalysis, ATP synthesis in the catalytic domain of F(1) is coupled via a rotary mechanism of the central stalk subunits to proton translocation. Its function is as follows. Key component of the F(0) channel; it plays a direct role in translocation across the membrane. A homomeric c-ring of between 10-14 subunits forms the central stalk rotor element with the F(1) delta and epsilon subunits. The sequence is that of ATP synthase subunit c from Acinetobacter baumannii (strain ACICU).